Reading from the N-terminus, the 175-residue chain is Shikimate kinase (175 aa).

10–15 lines the ATP pocket; the sequence is GAGKTT. Thr-14 provides a ligand contact to Mg(2+). Positions 32, 56, and 78 each coordinate substrate. Arg-116 serves as a coordination point for ATP. Residue Arg-135 participates in substrate binding.

Belongs to the shikimate kinase family. As to quaternary structure, monomer. It depends on Mg(2+) as a cofactor.

The protein resides in the cytoplasm. The catalysed reaction is shikimate + ATP = 3-phosphoshikimate + ADP + H(+). It functions in the pathway metabolic intermediate biosynthesis; chorismate biosynthesis; chorismate from D-erythrose 4-phosphate and phosphoenolpyruvate: step 5/7. In terms of biological role, catalyzes the specific phosphorylation of the 3-hydroxyl group of shikimic acid using ATP as a cosubstrate. The protein is Shikimate kinase of Aromatoleum aromaticum (strain DSM 19018 / LMG 30748 / EbN1) (Azoarcus sp. (strain EbN1)).